The following is a 467-amino-acid chain: DNA polymerase IV (467 aa).

In terms of domain architecture, UmuC spans 5 to 187 (VLHIDMDAFF…LPVGALWGVG (183 aa)). Mg(2+)-binding residues include D9 and D104. E105 is an active-site residue. 2 disordered regions span residues 364-383 (PDTD…STQV) and 429-449 (KGRT…DPLD).

The protein belongs to the DNA polymerase type-Y family. Monomer. It depends on Mg(2+) as a cofactor.

The protein resides in the cytoplasm. It carries out the reaction DNA(n) + a 2'-deoxyribonucleoside 5'-triphosphate = DNA(n+1) + diphosphate. In terms of biological role, poorly processive, error-prone DNA polymerase involved in untargeted mutagenesis. Copies undamaged DNA at stalled replication forks, which arise in vivo from mismatched or misaligned primer ends. These misaligned primers can be extended by PolIV. Exhibits no 3'-5' exonuclease (proofreading) activity. May be involved in translesional synthesis, in conjunction with the beta clamp from PolIII. This Corynebacterium glutamicum (strain ATCC 13032 / DSM 20300 / JCM 1318 / BCRC 11384 / CCUG 27702 / LMG 3730 / NBRC 12168 / NCIMB 10025 / NRRL B-2784 / 534) protein is DNA polymerase IV.